Reading from the N-terminus, the 166-residue chain is Crossover junction endodeoxyribonuclease RuvC (166 aa).

Active-site residues include Asp11, Glu70, and Asp142. The Mg(2+) site is built by Asp11, Glu70, and Asp142.

The protein belongs to the RuvC family. In terms of assembly, homodimer which binds Holliday junction (HJ) DNA. The HJ becomes 2-fold symmetrical on binding to RuvC with unstacked arms; it has a different conformation from HJ DNA in complex with RuvA. In the full resolvosome a probable DNA-RuvA(4)-RuvB(12)-RuvC(2) complex forms which resolves the HJ. Mg(2+) is required as a cofactor.

Its subcellular location is the cytoplasm. It carries out the reaction Endonucleolytic cleavage at a junction such as a reciprocal single-stranded crossover between two homologous DNA duplexes (Holliday junction).. Functionally, the RuvA-RuvB-RuvC complex processes Holliday junction (HJ) DNA during genetic recombination and DNA repair. Endonuclease that resolves HJ intermediates. Cleaves cruciform DNA by making single-stranded nicks across the HJ at symmetrical positions within the homologous arms, yielding a 5'-phosphate and a 3'-hydroxyl group; requires a central core of homology in the junction. The consensus cleavage sequence is 5'-(A/T)TT(C/G)-3'. Cleavage occurs on the 3'-side of the TT dinucleotide at the point of strand exchange. HJ branch migration catalyzed by RuvA-RuvB allows RuvC to scan DNA until it finds its consensus sequence, where it cleaves and resolves the cruciform DNA. The sequence is that of Crossover junction endodeoxyribonuclease RuvC from Nitratidesulfovibrio vulgaris (strain ATCC 29579 / DSM 644 / CCUG 34227 / NCIMB 8303 / VKM B-1760 / Hildenborough) (Desulfovibrio vulgaris).